The chain runs to 396 residues: 1-deoxy-D-xylulose 5-phosphate reductoisomerase (396 aa).

NADPH contacts are provided by Thr13, Gly14, Ser15, Ile16, and Asn127. Residue Lys128 participates in 1-deoxy-D-xylulose 5-phosphate binding. Glu129 contacts NADPH. Residue Asp153 coordinates Mn(2+). Residues Ser154, Glu155, Ser184, and His207 each contribute to the 1-deoxy-D-xylulose 5-phosphate site. Residue Glu155 participates in Mn(2+) binding. Gly213 is a binding site for NADPH. Residues Ser220, Asn225, Lys226, and Glu229 each contribute to the 1-deoxy-D-xylulose 5-phosphate site. Position 229 (Glu229) interacts with Mn(2+).

Belongs to the DXR family. It depends on Mg(2+) as a cofactor. Requires Mn(2+) as cofactor.

It catalyses the reaction 2-C-methyl-D-erythritol 4-phosphate + NADP(+) = 1-deoxy-D-xylulose 5-phosphate + NADPH + H(+). Its pathway is isoprenoid biosynthesis; isopentenyl diphosphate biosynthesis via DXP pathway; isopentenyl diphosphate from 1-deoxy-D-xylulose 5-phosphate: step 1/6. Functionally, catalyzes the NADPH-dependent rearrangement and reduction of 1-deoxy-D-xylulose-5-phosphate (DXP) to 2-C-methyl-D-erythritol 4-phosphate (MEP). This Pseudomonas putida (strain W619) protein is 1-deoxy-D-xylulose 5-phosphate reductoisomerase.